Reading from the N-terminus, the 296-residue chain is Transmembrane O-methyltransferase (296 aa).

A helical transmembrane segment spans residues 36–56 (VGTMSPAIALAFLPLVVTLLV). S-adenosyl-L-methionine contacts are provided by residues E142, 144-145 (GT), S150, E168, and S198.

This sequence belongs to the class I-like SAM-binding methyltransferase superfamily. Cation-dependent O-methyltransferase family. As to quaternary structure, interacts with LHFPL5, PCDH15, TMC1, TMC2 and TMIE. Interacts directly with TMC1. The interaction of TOMT with TMC1 and TMC2 is required for the transportation of TMC1/2 into the stereocilia of hair cells.

The protein localises to the membrane. It localises to the cytoplasm. It is found in the endoplasmic reticulum. It catalyses the reaction a catechol + S-adenosyl-L-methionine = a guaiacol + S-adenosyl-L-homocysteine + H(+). Functionally, catalyzes the O-methylation, and thereby the inactivation, of catecholamine neurotransmitters and catechol hormones. Required for auditory function. Component of the cochlear hair cell's mechanotransduction (MET) machinery. Involved in the assembly of the asymmetric tip-link MET complex. Required for transportation of TMC1 and TMC2 proteins into the mechanically sensitive stereocilia of the hair cells. The function in MET is independent of the enzymatic activity. This chain is Transmembrane O-methyltransferase, found in Macaca mulatta (Rhesus macaque).